We begin with the raw amino-acid sequence, 156 residues long: MATQNGGPTQNAAPSLNVLAQYIKDFSFENPNAPRSLAAPPSQPDVNIQIHVNARPGGNGEFEVELKIDGGASIEGNTLFAFELVYAGVFRILNVPEESLQPVALIECPRLLFPFARQIIADAVRNGGFPPLMIDPVDFAALFQQRMQQEGQRIQA.

This sequence belongs to the SecB family. Homotetramer, a dimer of dimers. One homotetramer interacts with 1 SecA dimer.

The protein resides in the cytoplasm. In terms of biological role, one of the proteins required for the normal export of preproteins out of the cell cytoplasm. It is a molecular chaperone that binds to a subset of precursor proteins, maintaining them in a translocation-competent state. It also specifically binds to its receptor SecA. This is Protein-export protein SecB from Xanthobacter autotrophicus (strain ATCC BAA-1158 / Py2).